A 400-amino-acid polypeptide reads, in one-letter code: Enoyl-[acyl-carrier-protein] reductase [NADH] (400 aa).

NAD(+) is bound by residues 48-53 (GASTGY), 74-75 (FE), 111-112 (DA), and 139-140 (LA). Residue tyrosine 225 participates in substrate binding. Tyrosine 235 acts as the Proton donor in catalysis. Residues lysine 244 and 273–275 (VVT) each bind NAD(+).

The protein belongs to the TER reductase family. As to quaternary structure, monomer.

It catalyses the reaction a 2,3-saturated acyl-[ACP] + NAD(+) = a (2E)-enoyl-[ACP] + NADH + H(+). Its pathway is lipid metabolism; fatty acid biosynthesis. Its function is as follows. Involved in the final reduction of the elongation cycle of fatty acid synthesis (FAS II). Catalyzes the reduction of a carbon-carbon double bond in an enoyl moiety that is covalently linked to an acyl carrier protein (ACP). The protein is Enoyl-[acyl-carrier-protein] reductase [NADH] of Burkholderia ambifaria (strain MC40-6).